A 1093-amino-acid chain; its full sequence is Mediator of RNA polymerase II transcription subunit 14 (1093 aa).

2 disordered regions span residues 1–62 (MPGV…IDGH) and 1034–1065 (ETKSEQDYSTQPAPENQSQTGAPSQAGMANDT). Residues 19-31 (DTQTPSNGDNLRN) are compositionally biased toward polar residues. Positions 41 to 62 (KGDKDHDPDKESYAGKPRIDGH) are enriched in basic and acidic residues. Polar residues predominate over residues 1040–1056 (DYSTQPAPENQSQTGAP).

The protein belongs to the Mediator complex subunit 14 family. As to quaternary structure, component of the Mediator complex.

It localises to the nucleus. In terms of biological role, component of the Mediator complex, a coactivator involved in the regulated transcription of nearly all RNA polymerase II-dependent genes. Mediator functions as a bridge to convey information from gene-specific regulatory proteins to the basal RNA polymerase II transcription machinery. Mediator is recruited to promoters by direct interactions with regulatory proteins and serves as a scaffold for the assembly of a functional preinitiation complex with RNA polymerase II and the general transcription factors. This Aspergillus fumigatus (strain ATCC MYA-4609 / CBS 101355 / FGSC A1100 / Af293) (Neosartorya fumigata) protein is Mediator of RNA polymerase II transcription subunit 14 (rgr1).